A 121-amino-acid chain; its full sequence is Large ribosomal subunit protein bL19 (121 aa).

Belongs to the bacterial ribosomal protein bL19 family.

This protein is located at the 30S-50S ribosomal subunit interface and may play a role in the structure and function of the aminoacyl-tRNA binding site. The sequence is that of Large ribosomal subunit protein bL19 from Chlamydia caviae (strain ATCC VR-813 / DSM 19441 / 03DC25 / GPIC) (Chlamydophila caviae).